Here is a 106-residue protein sequence, read N- to C-terminus: Nucleoid-associated protein Smlt1015 (106 aa).

Positions 81-106 (IDAESKSKMGSATAGMQLPPGMKLPF) are disordered.

Belongs to the YbaB/EbfC family. As to quaternary structure, homodimer.

The protein localises to the cytoplasm. It localises to the nucleoid. Functionally, binds to DNA and alters its conformation. May be involved in regulation of gene expression, nucleoid organization and DNA protection. This Stenotrophomonas maltophilia (strain K279a) protein is Nucleoid-associated protein Smlt1015.